Reading from the N-terminus, the 711-residue chain is Polyribonucleotide nucleotidyltransferase (711 aa).

Residues D494 and D500 each coordinate Mg(2+). Positions 560–620 (PKIEIFGVDP…INVENAKSDI (61 aa)) constitute a KH domain. Residues 651–710 (GEEFDGVVKKIMDFGAFISLKDGIDGLLHVSKIKTQLSEGDTLRVKVEEIKRGKISLELC) enclose the S1 motif domain.

The protein belongs to the polyribonucleotide nucleotidyltransferase family. Mg(2+) is required as a cofactor.

The protein resides in the cytoplasm. The catalysed reaction is RNA(n+1) + phosphate = RNA(n) + a ribonucleoside 5'-diphosphate. Functionally, involved in mRNA degradation. Catalyzes the phosphorolysis of single-stranded polyribonucleotides processively in the 3'- to 5'-direction. The sequence is that of Polyribonucleotide nucleotidyltransferase from Campylobacter hominis (strain ATCC BAA-381 / DSM 21671 / CCUG 45161 / LMG 19568 / NCTC 13146 / CH001A).